The sequence spans 447 residues: GTPase Der (447 aa).

EngA-type G domains lie at 3–167 and 180–353; these read PVIA…HLAD and IRLA…ASAN. GTP contacts are provided by residues 9–16, 56–60, 119–122, 186–193, 233–237, and 298–301; these read GRPNVGKS, DTGGF, NKAE, DTAGL, and NKWD. Residues 354–438 form the KH-like domain; it reads RKMSTPVLTR…PMRIQMKSSH (85 aa).

It belongs to the TRAFAC class TrmE-Era-EngA-EngB-Septin-like GTPase superfamily. EngA (Der) GTPase family. Associates with the 50S ribosomal subunit.

GTPase that plays an essential role in the late steps of ribosome biogenesis. The protein is GTPase Der of Polaromonas sp. (strain JS666 / ATCC BAA-500).